Consider the following 353-residue polypeptide: Terpene synthase 1 (353 aa).

The DDxx(x)D/E motif signature appears at 81 to 86; that stretch reads DDAIDA. The short motif at 222 to 230 is the NDxxSxxxD/E motif element; sequence NDLVSYEKE.

This sequence belongs to the terpene synthase family.

It catalyses the reaction (2E,6E)-farnesyl diphosphate = (2S,3R,6S,9S)-(-)-protoillud-7-ene + diphosphate. Its function is as follows. Terpene synthase that converts its substrate farnesyl diphosphate (FPP) into the sesquiterpene protoillud-7-ene. In Tieghemostelium lacteum (Slime mold), this protein is Terpene synthase 1.